We begin with the raw amino-acid sequence, 331 residues long: Proton-translocating ferredoxin:NAD(+) oxidoreductase complex subunit D (331 aa).

3 helical membrane-spanning segments follow: residues 23 to 43, 44 to 64, and 84 to 106; these read ESVS…AVFG, VFNF…AAVV, and AFLT…MVAI. Threonine 163 is modified (FMN phosphoryl threonine). Helical transmembrane passes span 196–216, 226–246, 251–271, and 273–293; these read NGSI…YLIY, VVMI…TGIF, VFHM…TDMV, and IPMT…LTSL.

Belongs to the NqrB/RnfD family. In terms of assembly, the complex is composed of six subunits: RnfA, RnfB, RnfC, RnfD, RnfE and RnfG. FMN is required as a cofactor.

It is found in the cell membrane. Its function is as follows. Part of a membrane-bound complex that couples electron transfer with translocation of ions across the membrane. Couples electron transfer from reduced ferredoxin to NAD(+) with translocation of H(+) out of the cell. Essential for energy conservation during autotrophic growth. Contributes to ATP synthesis during heterotrophic growth. The chain is Proton-translocating ferredoxin:NAD(+) oxidoreductase complex subunit D from Clostridium ljungdahlii (strain ATCC 55383 / DSM 13528 / PETC).